The primary structure comprises 103 residues: Large ribosomal subunit protein bL21 (103 aa).

This sequence belongs to the bacterial ribosomal protein bL21 family. In terms of assembly, part of the 50S ribosomal subunit. Contacts protein L20.

Functionally, this protein binds to 23S rRNA in the presence of protein L20. In Leptothrix cholodnii (strain ATCC 51168 / LMG 8142 / SP-6) (Leptothrix discophora (strain SP-6)), this protein is Large ribosomal subunit protein bL21.